Reading from the N-terminus, the 499-residue chain is Ubiquitin carboxyl-terminal hydrolase 16 (499 aa).

Residues 53-497 (VGLINRGNDC…YAYMLYYERV (445 aa)) form the USP domain. The active-site Nucleophile is the Cys-62. Catalysis depends on His-407, which acts as the Proton acceptor.

Belongs to the peptidase C19 family.

It catalyses the reaction Thiol-dependent hydrolysis of ester, thioester, amide, peptide and isopeptide bonds formed by the C-terminal Gly of ubiquitin (a 76-residue protein attached to proteins as an intracellular targeting signal).. The polypeptide is Ubiquitin carboxyl-terminal hydrolase 16 (UBP16) (Saccharomyces cerevisiae (strain ATCC 204508 / S288c) (Baker's yeast)).